The following is a 154-amino-acid chain: Interleukin-2 (154 aa).

An N-terminal signal peptide occupies residues 1-20 (MYKMQLLSCIALTLALVANG). Thr-23 is a glycosylation site (O-linked (GalNAc...) threonine). A disulfide bridge links Cys-78 with Cys-126.

The protein belongs to the IL-2 family.

The protein resides in the secreted. Functionally, cytokine produced by activated CD4-positive helper T-cells and to a lesser extend activated CD8-positive T-cells and natural killer (NK) cells that plays pivotal roles in the immune response and tolerance. Binds to a receptor complex composed of either the high-affinity trimeric IL-2R (IL2RA/CD25, IL2RB/CD122 and IL2RG/CD132) or the low-affinity dimeric IL-2R (IL2RB and IL2RG). Interaction with the receptor leads to oligomerization and conformation changes in the IL-2R subunits resulting in downstream signaling starting with phosphorylation of JAK1 and JAK3. In turn, JAK1 and JAK3 phosphorylate the receptor to form a docking site leading to the phosphorylation of several substrates including STAT5. This process leads to activation of several pathways including STAT, phosphoinositide-3-kinase/PI3K and mitogen-activated protein kinase/MAPK pathways. Functions as a T-cell growth factor and can increase NK-cell cytolytic activity as well. Promotes strong proliferation of activated B-cells and subsequently immunoglobulin production. Plays a pivotal role in regulating the adaptive immune system by controlling the survival and proliferation of regulatory T-cells, which are required for the maintenance of immune tolerance. Moreover, participates in the differentiation and homeostasis of effector T-cell subsets, including Th1, Th2, Th17 as well as memory CD8-positive T-cells. The protein is Interleukin-2 (IL2) of Delphinapterus leucas (Beluga whale).